A 275-amino-acid chain; its full sequence is Large ribosomal subunit protein uL2c (275 aa).

The segment at 225–249 (PVDHPHGGGEGRAPIGRKKPTTPWG) is disordered.

Belongs to the universal ribosomal protein uL2 family. As to quaternary structure, part of the 50S ribosomal subunit.

It is found in the plastid. The sequence is that of Large ribosomal subunit protein uL2c (rpl2) from Cuscuta reflexa (Southern Asian dodder).